The sequence spans 265 residues: Phosphate import ATP-binding protein PstB 2 (265 aa).

The ABC transporter domain maps to 13–260; that stretch reads FRTENLNVYY…PTKQATRDYV (248 aa). 45–52 contacts ATP; it reads GPSGCGKS.

Belongs to the ABC transporter superfamily. Phosphate importer (TC 3.A.1.7) family. In terms of assembly, the complex is composed of two ATP-binding proteins (PstB), two transmembrane proteins (PstC and PstA) and a solute-binding protein (PstS).

It localises to the cell inner membrane. It carries out the reaction phosphate(out) + ATP + H2O = ADP + 2 phosphate(in) + H(+). Part of the ABC transporter complex PstSACB involved in phosphate import. Responsible for energy coupling to the transport system. In Synechococcus sp. (strain JA-3-3Ab) (Cyanobacteria bacterium Yellowstone A-Prime), this protein is Phosphate import ATP-binding protein PstB 2.